The following is a 146-amino-acid chain: 3-dehydroquinate dehydratase (146 aa).

Tyr22 functions as the Proton acceptor in the catalytic mechanism. Substrate contacts are provided by Asn73, His79, and Asp86. The active-site Proton donor is the His99. Residues 100–101 (LS) and Arg110 contribute to the substrate site.

The protein belongs to the type-II 3-dehydroquinase family. In terms of assembly, homododecamer.

It carries out the reaction 3-dehydroquinate = 3-dehydroshikimate + H2O. It functions in the pathway metabolic intermediate biosynthesis; chorismate biosynthesis; chorismate from D-erythrose 4-phosphate and phosphoenolpyruvate: step 3/7. Its function is as follows. Catalyzes a trans-dehydration via an enolate intermediate. The sequence is that of 3-dehydroquinate dehydratase from Synechococcus sp. (strain CC9605).